The following is a 436-amino-acid chain: MSNFFENYLRQVDDIETVSFVGRVQKIKGLLVESLGPQCAIGDLCLIDQRNGKKVCAEVLGFNGPYVSLMAYEGFSGIEVGNKVYSLNKGLEINLSDELLGRVIDSLGRPIDNKGSFLNNSYKELIFEKINPINRSIFEDQILTGVKVLDGFLPVAKGQRVGIFSGSGVGKSTLLGMIAKNSNADVNVIAFIGERGRELNEFIEHELGEERLKKSVLVVSTSDESPISRYKGAYVATMIAEYFREQGKDVALLFDSITRFANAKREMSLSLGEPPVAKGYPPSVFVEIPILLERSGFNGNGGSVTGFYTVLVEGDDFTEPVADNIKAVLDGHIILDRDLFDRGIYPSINVLSSTSRSIHRIMSLEKQKLIMKARNLLSIYKDYEDLIRTGIYLKGSNKDVDFAISKYPKIINFISQGINETFDFENLEDEIKEILS.

165 to 172 (SGSGVGKS) serves as a coordination point for ATP.

Belongs to the ATPase alpha/beta chains family.

The protein localises to the cytoplasm. It catalyses the reaction ATP + H2O + 4 H(+)(in) = ADP + phosphate + 5 H(+)(out). Probable catalytic subunit of a protein translocase for flagellum-specific export, or a proton translocase involved in local circuits at the flagellum. May be involved in a specialized protein export pathway that proceeds without signal peptide cleavage. In Borreliella burgdorferi (strain ATCC 35210 / DSM 4680 / CIP 102532 / B31) (Borrelia burgdorferi), this protein is Flagellum-specific ATP synthase (fliI).